The chain runs to 652 residues: Inactive leucine-rich repeat receptor-like serine/threonine-protein kinase At1g60630 (652 aa).

The signal sequence occupies residues 1 to 23 (MISSSSCMFFLVFAFFLISPVRS). At 24–256 (SDVEALLSLK…SRTKLIGIIS (233 aa)) the chain is on the extracellular side. LRR repeat units lie at residues 64-84 (SKLV…SLNQ), 85-108 (LDQL…LSGL), 109-132 (VNLK…LTSL), 134-156 (RLKT…LLRL), 158-178 (RLYT…PLNQ), and 179-203 (ATLR…ALNR). 3 N-linked (GlcNAc...) asparagine glycosylation sites follow: asparagine 72, asparagine 104, and asparagine 120. N-linked (GlcNAc...) asparagine glycans are attached at residues asparagine 185, asparagine 205, and asparagine 225. The chain crosses the membrane as a helical span at residues 257–277 (GSICGGILILLLTFLLICLLW). The Cytoplasmic segment spans residues 278 to 652 (RRKRSKSKRE…SLPREDHMSI (375 aa)). Positions 286-321 (REERRSKRVAESKEAKTAETEEGTSDQKNKRFSWEK) are disordered. Residues 350–624 (KASAETLGRG…VKDARAEAAL (275 aa)) form the Protein kinase domain. A Phosphoserine modification is found at serine 352. Residues 356–364 (LGRGTLGST) and lysine 378 each bind ATP. Residues serine 430 and serine 433 each carry the phosphoserine modification. Phosphothreonine is present on threonine 509. Residues 630–652 (SDHSPGRWSDTIQSLPREDHMSI) form a disordered region.

Belongs to the protein kinase superfamily. Ser/Thr protein kinase family.

The protein localises to the cell membrane. This is Inactive leucine-rich repeat receptor-like serine/threonine-protein kinase At1g60630 from Arabidopsis thaliana (Mouse-ear cress).